Consider the following 509-residue polypeptide: Photosystem II CP47 reaction center protein (509 aa).

The next 6 helical transmembrane spans lie at 21–36, 101–115, 140–156, 203–218, 237–252, and 457–472; these read SVHLMHTALVSGWAGS, IVLSGLLFLASIWHW, GIHLVLSSLLCFGFGAF, IAAGTVGILAGVFHLN, VLSSSIAAVFFASFVV, and NFALLFFFGHLWHGSR.

This sequence belongs to the PsbB/PsbC family. PsbB subfamily. PSII is composed of 1 copy each of membrane proteins PsbA, PsbB, PsbC, PsbD, PsbE, PsbF, PsbH, PsbI, PsbJ, PsbK, PsbL, PsbM, PsbT, PsbY, PsbZ, Psb30/Ycf12, at least 3 peripheral proteins of the oxygen-evolving complex and a large number of cofactors. It forms dimeric complexes. Binds multiple chlorophylls. PSII binds additional chlorophylls, carotenoids and specific lipids. is required as a cofactor.

The protein resides in the plastid. The protein localises to the chloroplast thylakoid membrane. One of the components of the core complex of photosystem II (PSII). It binds chlorophyll and helps catalyze the primary light-induced photochemical processes of PSII. PSII is a light-driven water:plastoquinone oxidoreductase, using light energy to abstract electrons from H(2)O, generating O(2) and a proton gradient subsequently used for ATP formation. This Cyanidium caldarium (Red alga) protein is Photosystem II CP47 reaction center protein.